A 367-amino-acid polypeptide reads, in one-letter code: MTASRRTLMVMAGGTGGHVFPGLAVAHRMEAAGWRVVWLGNPAGMEATLVPKHGIPMEYVRFGGLRGKGLKTKLTLPFNLLRACWQSLGALRRVRPDVVLGMGGYITFPAGVMAALSGRPLVLHEQNSIAGLANKVLAKFAKRVLVAFPGALPHAEWTGNPIRAELARTETPQARYASRSGPLNLLVVGGSLGAAALNEVVPRALALLAPGERPRVVHQAGAKHIDALKANYEAAGFAGGDAVRLVPFIDDMASAYAAADLVICRSGAMTVSEIAAVGVAALFVPFPYAVDDHQTTNAAFLADAGAAVLVQQRDLSAELLADWLRSQSRASLADMAERSRSLAKPEATDEVARICATVAGANLEEIK.

Residues Thr-15–Gly-17, Asn-127, Arg-163, Ser-191, Ile-249, and Gln-294 each bind UDP-N-acetyl-alpha-D-glucosamine.

It belongs to the glycosyltransferase 28 family. MurG subfamily.

It localises to the cell inner membrane. The catalysed reaction is di-trans,octa-cis-undecaprenyl diphospho-N-acetyl-alpha-D-muramoyl-L-alanyl-D-glutamyl-meso-2,6-diaminopimeloyl-D-alanyl-D-alanine + UDP-N-acetyl-alpha-D-glucosamine = di-trans,octa-cis-undecaprenyl diphospho-[N-acetyl-alpha-D-glucosaminyl-(1-&gt;4)]-N-acetyl-alpha-D-muramoyl-L-alanyl-D-glutamyl-meso-2,6-diaminopimeloyl-D-alanyl-D-alanine + UDP + H(+). Its pathway is cell wall biogenesis; peptidoglycan biosynthesis. Functionally, cell wall formation. Catalyzes the transfer of a GlcNAc subunit on undecaprenyl-pyrophosphoryl-MurNAc-pentapeptide (lipid intermediate I) to form undecaprenyl-pyrophosphoryl-MurNAc-(pentapeptide)GlcNAc (lipid intermediate II). This is UDP-N-acetylglucosamine--N-acetylmuramyl-(pentapeptide) pyrophosphoryl-undecaprenol N-acetylglucosamine transferase from Burkholderia ambifaria (strain MC40-6).